A 158-amino-acid polypeptide reads, in one-letter code: MFRGIYETTIDAKGRTSLPAKFREVLVDVHGDDRFVITNSAPVDLGAGTFSSGLLIFPYAKWVEFEENFRSSKGLTSAQRNSIMRTIISPAVECCADKLGRLLIPPHLRKGAALERDILFVGVMDKIEVWSQAEREKVRIQDLKNFPSDSETVAELGL.

2 consecutive SpoVT-AbrB domains span residues 5-52 (IYET…TFSS) and 91-134 (AVEC…SQAE).

This sequence belongs to the MraZ family. As to quaternary structure, forms oligomers.

Its subcellular location is the cytoplasm. The protein localises to the nucleoid. The chain is Transcriptional regulator MraZ from Geobacter sulfurreducens (strain ATCC 51573 / DSM 12127 / PCA).